The sequence spans 440 residues: Histidinol dehydrogenase (440 aa).

Positions 136, 197, and 220 each coordinate NAD(+). Positions 243, 265, and 268 each coordinate substrate. 2 residues coordinate Zn(2+): Gln265 and His268. Catalysis depends on proton acceptor residues Glu333 and His334. Substrate is bound by residues His334, Asp367, Glu421, and His426. Residue Asp367 coordinates Zn(2+). Residue His426 participates in Zn(2+) binding.

This sequence belongs to the histidinol dehydrogenase family. The cofactor is Zn(2+).

The enzyme catalyses L-histidinol + 2 NAD(+) + H2O = L-histidine + 2 NADH + 3 H(+). It functions in the pathway amino-acid biosynthesis; L-histidine biosynthesis; L-histidine from 5-phospho-alpha-D-ribose 1-diphosphate: step 9/9. Its function is as follows. Catalyzes the sequential NAD-dependent oxidations of L-histidinol to L-histidinaldehyde and then to L-histidine. The chain is Histidinol dehydrogenase from Pseudomonas aeruginosa (strain ATCC 15692 / DSM 22644 / CIP 104116 / JCM 14847 / LMG 12228 / 1C / PRS 101 / PAO1).